The following is a 233-amino-acid chain: uncharacterized protein (233 aa).

Belongs to the methyltransferase superfamily.

This is an uncharacterized protein from Bacillus subtilis (strain 168).